We begin with the raw amino-acid sequence, 2108 residues long: Mycocerosic acid synthase-like polyketide synthase (2108 aa).

The N-terminal stretch at Met1–Gly23 is a signal peptide. A lipid anchor (N-palmitoyl cysteine) is attached at Cys24. Cys24 is lipidated: S-diacylglycerol cysteine. A Ketosynthase family 3 (KS3) domain is found at Cys24–Gln436. Cys185 serves as the catalytic Acyl-thioester intermediate; for beta-ketoacyl synthase activity. Catalysis depends on for beta-ketoacyl synthase activity residues His320 and His356. Residues Pro438 to Asp542 are linker domain (LD). The acyltransferase (AT) stretch occupies residues Arg543–Glu842. Ser634 serves as the catalytic Acyl-ester intermediate; for acyltransferase activity. The interval Asn900–Thr1184 is dehydratase (DH). The tract at residues His905 to Asp1025 is N-terminal hotdog fold. A PKS/mFAS DH domain is found at His905 to Glu1191. His938 serves as the catalytic Proton acceptor; for dehydratase activity. Residues Pro1044–Glu1191 are C-terminal hotdog fold. Asp1108 acts as the Proton donor; for dehydratase activity in catalysis. Residues Ala1220–Asn1391 form a pseudo beta-ketoacyl reductase (PsiKR) region. The interval Ala1419–Val1743 is enoylreductase (ER). Residues Gly1765–Ser2004 form a beta-ketoacyl reductase (KR) region. NADP(+) contacts are provided by residues Leu1773–Leu1776, Ser1796–Gln1799, Asp1824–Ile1825, and Phe1897–Ser1898. One can recognise a Carrier domain in the interval Glu2025–Asp2101. Ser2060 bears the O-(pantetheine 4'-phosphoryl)serine mark.

In terms of assembly, homodimer.

It is found in the cell membrane. The protein operates within lipid metabolism; fatty acid biosynthesis. Polyketide synthase likely involved in the biosynthesis of a polymethyl-branched fatty acid (PMB-FA) that might only be produced during host infection. Is required for the full virulence of M.tuberculosis during host infection. This Mycobacterium tuberculosis (strain ATCC 25618 / H37Rv) protein is Mycocerosic acid synthase-like polyketide synthase.